A 235-amino-acid chain; its full sequence is Uridylate kinase (235 aa).

Residue 9 to 12 (KLSG) coordinates ATP. Gly51 contacts UMP. The ATP site is built by Gly52 and Arg56. Residues Asp71 and 133–140 (SGNPFFTT) contribute to the UMP site. ATP contacts are provided by Thr160, Tyr166, and Asp169.

This sequence belongs to the UMP kinase family. In terms of assembly, homohexamer.

Its subcellular location is the cytoplasm. The enzyme catalyses UMP + ATP = UDP + ADP. It participates in pyrimidine metabolism; CTP biosynthesis via de novo pathway; UDP from UMP (UMPK route): step 1/1. With respect to regulation, inhibited by UTP. Catalyzes the reversible phosphorylation of UMP to UDP. In Gloeobacter violaceus (strain ATCC 29082 / PCC 7421), this protein is Uridylate kinase.